The chain runs to 398 residues: Phosphoglycerate kinase (398 aa).

Residues 23–25 (DLN), Arg-38, 61–64 (HFGR), Arg-120, and Arg-153 each bind substrate. ATP is bound by residues Lys-203, Glu-325, and 355–358 (GGDT).

It belongs to the phosphoglycerate kinase family. In terms of assembly, monomer.

Its subcellular location is the cytoplasm. The enzyme catalyses (2R)-3-phosphoglycerate + ATP = (2R)-3-phospho-glyceroyl phosphate + ADP. It participates in carbohydrate degradation; glycolysis; pyruvate from D-glyceraldehyde 3-phosphate: step 2/5. This Chelativorans sp. (strain BNC1) protein is Phosphoglycerate kinase.